A 305-amino-acid chain; its full sequence is Tetraspanin-12 (305 aa).

The Cytoplasmic segment spans residues 1–12 (MAREDSVKCLRC). 2 S-palmitoyl cysteine lipidation sites follow: C9 and C12. A helical transmembrane segment spans residues 13-33 (LLYALNLLFWLMSISVLAVSA). The Extracellular portion of the chain corresponds to 34-59 (WMRDYLNNVLTLTAETRVEEAVILTY). The chain crosses the membrane as a helical span at residues 60–80 (FPVVHPVMIAVCCFLIIVGML). The Cytoplasmic portion of the chain corresponds to 81-89 (GYCGTVKRN). Residue C83 is the site of S-palmitoyl cysteine attachment. The chain crosses the membrane as a helical span at residues 90-110 (LLLLAWYFGSLLVIFCVELAC). The Extracellular segment spans residues 111 to 224 (GVWTYEQEIM…RGTKQLQVLR (114 aa)). A helical membrane pass occupies residues 225–245 (FLGISIGVTQILAMILTITLL). At 246-305 (WALYYDRREPGTDQMMALKNDTTQHLPCHSVELLKPSLSRIFEHTSMANSFNTHFEMEEL) the chain is on the cytoplasmic side.

This sequence belongs to the tetraspanin (TM4SF) family. In terms of assembly, component of a complex, at least composed of TSPAN12, FZD4 and norrin (NDP). Interacts (when palmitoylated) with ADAM10. Interacts with MMP14/MT1-MMP. Palmitoylated; required for interaction with ADAM10. The precise position of palmitoylated residues is unclear and occurs either on Cys-9, Cys-12 and/or Cys-83.

It localises to the cell membrane. Functionally, regulator of cell surface receptor signal transduction. Plays a central role in retinal vascularization by regulating norrin (NDP) signal transduction. Acts in concert with norrin (NDP) to promote FZD4 multimerization and subsequent activation of FZD4, leading to promote accumulation of beta-catenin (CTNNB1) and stimulate LEF/TCF-mediated transcriptional programs. Suprisingly, it only activates the norrin (NDP)-dependent activation of FZD4, while it does not activate the Wnt-dependent activation of FZD4, suggesting the existence of a Wnt-independent signaling that also promote accumulation the beta-catenin (CTNNB1). Acts as a regulator of membrane proteinases such as ADAM10 and MMP14/MT1-MMP. Activates ADAM10-dependent cleavage activity of amyloid precursor protein (APP). Activates MMP14/MT1-MMP-dependent cleavage activity. In Bos taurus (Bovine), this protein is Tetraspanin-12 (TSPAN12).